The following is a 106-amino-acid chain: Cell division topological specificity factor (106 aa).

It belongs to the MinE family.

Prevents the cell division inhibition by proteins MinC and MinD at internal division sites while permitting inhibition at polar sites. This ensures cell division at the proper site by restricting the formation of a division septum at the midpoint of the long axis of the cell. The polypeptide is Cell division topological specificity factor (Prochlorococcus marinus (strain SARG / CCMP1375 / SS120)).